Consider the following 239-residue polypeptide: MPGAIRDLINPVSSAASASKEDTVNNVFFLEKDLFPGSKMTLHFTRATAGAALLPRGRADSVPFASEKLPEILSQLSVPAGSPAADAMRSTLAECEAAPQAGEAKRCATSLESMVEFAASSLGTRDVHAVSTEVDRAGPTPRQAYRVEAVRPVPVSGGDMVACHGMAYAYAVFGCHTTTAAAYTVTLAGADGTKAEALAACHTDAAPRVAEAYKRLGVAPGSVPVCHFLPQDDMLWVRN.

Positions 1 to 19 (MPGAIRDLINPVSSAASAS) are cleaved as a signal peptide. The 212-residue stretch at 28–239 (FFLEKDLFPG…PQDDMLWVRN (212 aa)) folds into the BURP domain.

In terms of tissue distribution, expressed in leaves and shoot.

The chain is BURP domain-containing protein 6 (BURP6) from Oryza sativa subsp. japonica (Rice).